A 162-amino-acid polypeptide reads, in one-letter code: NADH-quinone oxidoreductase subunit I (162 aa).

2 consecutive 4Fe-4S ferredoxin-type domains span residues 53–83 (QRRY…IESE) and 93–122 (SRYD…ETHI). 8 residues coordinate [4Fe-4S] cluster: cysteine 63, cysteine 66, cysteine 69, cysteine 73, cysteine 102, cysteine 105, cysteine 108, and cysteine 112.

This sequence belongs to the complex I 23 kDa subunit family. As to quaternary structure, NDH-1 is composed of 14 different subunits. Subunits NuoA, H, J, K, L, M, N constitute the membrane sector of the complex. It depends on [4Fe-4S] cluster as a cofactor.

It localises to the cell inner membrane. The enzyme catalyses a quinone + NADH + 5 H(+)(in) = a quinol + NAD(+) + 4 H(+)(out). In terms of biological role, NDH-1 shuttles electrons from NADH, via FMN and iron-sulfur (Fe-S) centers, to quinones in the respiratory chain. The immediate electron acceptor for the enzyme in this species is believed to be ubiquinone. Couples the redox reaction to proton translocation (for every two electrons transferred, four hydrogen ions are translocated across the cytoplasmic membrane), and thus conserves the redox energy in a proton gradient. The protein is NADH-quinone oxidoreductase subunit I of Chromobacterium violaceum (strain ATCC 12472 / DSM 30191 / JCM 1249 / CCUG 213 / NBRC 12614 / NCIMB 9131 / NCTC 9757 / MK).